Consider the following 1162-residue polypeptide: Paired amphipathic helix protein Sin3-like 5 (1162 aa).

Residues methionine 1–threonine 37 are disordered. Residues threonine 18–serine 30 are compositionally biased toward polar residues. PAH domains are found at residues arginine 28–glycine 109 and lysine 123–phenylalanine 193. Disordered stretches follow at residues arginine 702 to glutamate 727, glutamine 743 to asparagine 779, glycine 803 to glycine 830, and lysine 1121 to arginine 1143. At serine 817 the chain carries Phosphoserine. Residues alanine 1123 to serine 1139 show a composition bias toward polar residues.

Its subcellular location is the nucleus. Its function is as follows. Acts as a transcriptional repressor. Plays roles in regulating gene expression and genome stability. In Arabidopsis thaliana (Mouse-ear cress), this protein is Paired amphipathic helix protein Sin3-like 5 (SNL5).